We begin with the raw amino-acid sequence, 217 residues long: KH domain-containing protein 3 (217 aa).

The involved in RNA binding stretch occupies residues methionine 1–lysine 40. A KH; atypical domain is found at lysine 40–isoleucine 103. A disordered region spans residues glutamine 129 to leucine 217. Residues isoleucine 138 to glycine 155 show a composition bias toward basic and acidic residues. 2 positions are modified to phosphothreonine; by ATM: threonine 145 and threonine 156. 2 stretches are compositionally biased toward polar residues: residues threonine 156 to serine 170 and alanine 177 to serine 194. Position 182 is a phosphoserine (serine 182). Over residues arginine 205–leucine 217 the composition is skewed to basic and acidic residues.

It belongs to the KHDC1 family. Component of the subcortical maternal complex (SCMC), at least composed of NLRP5, KHDC3L, OOEP, and TLE6 isoform 1. Within the complex, interacts with NLRP5, KHDC3L and TLE6 isoform 1. The SCMC may facilitate translocation of its components between the nuclear and cytoplasmic compartments. Forms a scaffold complex with OOEP/FLOPED, and interacts with BLM and TRIM25 at DNA replication forks. Interacts with PARP1; the interaction is increased following the formation of DNA double-strand breaks. Interacts with NUMA1. As to expression, expression appears to be maximal in germinal vesicle oocytes, it tails off through metaphase II oocytes and is undetectable following the completion of the oocyte to embryo transition.

It is found in the cytoplasm. The protein localises to the cell cortex. Its subcellular location is the nucleus. It localises to the mitochondrion. The protein resides in the cytoskeleton. It is found in the microtubule organizing center. The protein localises to the centrosome. Its subcellular location is the chromosome. Its function is as follows. Component of the subcortical maternal complex (SCMC), a multiprotein complex that plays a key role in early embryonic development. The SCMC complex is a structural constituent of cytoplasmic lattices, which consist in fibrous structures found in the cytoplasm of oocytes and preimplantation embryos. They are required to store maternal proteins critical for embryonic development, such as proteins that control epigenetic reprogramming of the preimplantation embryo, and prevent their degradation or activation. KHDC3 ensures proper spindle assembly by regulating the localization of AURKA via RHOA signaling and of PLK1 via a RHOA-independent process. Required for the localization of MAD2L1 to kinetochores to enable spindle assembly checkpoint function. As part of the OOEP-KHDC3 scaffold, recruits BLM and TRIM25 to DNA replication forks, thereby promoting the ubiquitination of BLM by TRIM25, enhancing BLM retainment at replication forks and therefore promoting stalled replication fork restart. Regulates homologous recombination-mediated DNA repair via recruitment of RAD51 to sites of DNA double-strand breaks, and sustainment of PARP1 activity, which in turn modulates downstream ATM or ATR activation. Activation of ATM or ATR in response to DNA double-strand breaks may be cell-type specific. Its role in DNA double-strand break repair is independent of its role in restarting stalled replication forks. Promotes neural stem cell neurogenesis and neuronal differentiation in the hippocampus. May regulate normal development of learning, memory and anxiety. Capable of binding RNA. This is KH domain-containing protein 3 from Homo sapiens (Human).